The following is a 224-amino-acid chain: N-(5'-phosphoribosyl)anthranilate isomerase (224 aa).

Belongs to the TrpF family.

The catalysed reaction is N-(5-phospho-beta-D-ribosyl)anthranilate = 1-(2-carboxyphenylamino)-1-deoxy-D-ribulose 5-phosphate. It participates in amino-acid biosynthesis; L-tryptophan biosynthesis; L-tryptophan from chorismate: step 3/5. This is N-(5'-phosphoribosyl)anthranilate isomerase from Allorhizobium ampelinum (strain ATCC BAA-846 / DSM 112012 / S4) (Agrobacterium vitis (strain S4)).